A 315-amino-acid chain; its full sequence is Hydrogenase-4 component C (315 aa).

Over 1 to 10 (MRQTLCDGYL) the chain is Periplasmic. A helical membrane pass occupies residues 11–31 (VIFALAQAVILLMLTPLFTGI). Residues 32–73 (SRQIRARMHSRRGPGIWQDYRDIHKLFKRQEVAPTSSGLMFR) lie on the Cytoplasmic side of the membrane. A helical transmembrane segment spans residues 74 to 94 (LMPWVLISSMLVLAMALPLFI). Topologically, residues 95–98 (TVSP) are periplasmic. Residues 99–119 (FAGGGDLITLIYLLALFRFFF) traverse the membrane as a helical segment. Residues 120–140 (ALSGLDTGSPFAGVGASRELT) are Cytoplasmic-facing. Residues 141–161 (LGILVEPMLILSLLVLALIAG) form a helical membrane-spanning segment. Residues 162-181 (STHIEMISNTLAMGWNSPLT) are Periplasmic-facing. A helical membrane pass occupies residues 182 to 202 (TVLALLACGFACFIEMGKIPF). The Cytoplasmic portion of the chain corresponds to 203–228 (DVAEAEQELQEGPLTEYSGAGLALAK). The chain crosses the membrane as a helical span at residues 229-249 (WGLGLKQVVMASLFVALFLPF). Residues 250–256 (GRAQELS) lie on the Periplasmic side of the membrane. Residues 257–277 (LACLLTSLVVTLLKVLLIFVL) traverse the membrane as a helical segment. The Cytoplasmic segment spans residues 278–289 (ASIAENTLARGR). A helical transmembrane segment spans residues 290–310 (FLLIHHVTWLGFSLAALAWVF). Residues 311–315 (WLTGL) lie on the Periplasmic side of the membrane.

The protein belongs to the complex I subunit 1 family.

It localises to the cell inner membrane. Possible component of hydrogenase 4. The polypeptide is Hydrogenase-4 component C (Escherichia coli (strain K12)).